A 198-amino-acid chain; its full sequence is CASP-like protein 4B3 (198 aa).

The segment at 1–27 is disordered; sequence MSSSGPPAGDGRDDASGPGPAGAAAAA. At 1 to 51 the chain is on the cytoplasmic side; that stretch reads MSSSGPPAGDGRDDASGPGPAGAAAAADGSVPVSRSIVERWKMEPAAARAR. Positions 16–27 are enriched in low complexity; sequence SGPGPAGAAAAA. The chain crosses the membrane as a helical span at residues 52–72; it reads LLLRAVAWLFSLLALVVMASN. Residues 73 to 85 lie on the Extracellular side of the membrane; that stretch reads KHGHGGAQDFDNY. Residues 86 to 106 form a helical membrane-spanning segment; it reads PEYTYCLGISIIAVLYTTAQV. The Cytoplasmic segment spans residues 107-124; that stretch reads TRDVHRLSWGRDVIAGRK. The chain crosses the membrane as a helical span at residues 125-145; that stretch reads AAAVVDFAGDQVVAYLLMSAL. Residues 146–166 are Extracellular-facing; that stretch reads SAAAPVTDYMRQAADNLFTDS. Residues 167-187 traverse the membrane as a helical segment; it reads AAAAISMAFLAFLAAGLSALV. Topologically, residues 188-198 are cytoplasmic; it reads SGYNLAMEVLV.

It belongs to the Casparian strip membrane proteins (CASP) family. Homodimer and heterodimers.

It is found in the cell membrane. In Oryza sativa subsp. japonica (Rice), this protein is CASP-like protein 4B3.